A 206-amino-acid polypeptide reads, in one-letter code: MTKLSKRQLDILTFIKEEVKSKGYPPSVREIGEAVGLASSSTVHGHLARLETKGLIRRDPTKPRAIEVLDEEELNIPKSAVMNVPVIGKVTAGLPITAVENVEEYFPLPETFAAPDEQVFMLEIMGESMIDAGILDKDYVIVRQQSTANNGDIVVAMTEEDEATVKRFYKEDTHFRLQPENPSMEPIILQNVSILGKVIGVFRNIH.

Residues V28–A48 constitute a DNA-binding region (H-T-H motif). Active-site for autocatalytic cleavage activity residues include S128 and K166.

Belongs to the peptidase S24 family. As to quaternary structure, homodimer.

It carries out the reaction Hydrolysis of Ala-|-Gly bond in repressor LexA.. In terms of biological role, represses a number of genes involved in the response to DNA damage (SOS response), including recA and lexA. In the presence of single-stranded DNA, RecA interacts with LexA causing an autocatalytic cleavage which disrupts the DNA-binding part of LexA, leading to derepression of the SOS regulon and eventually DNA repair. The protein is LexA repressor of Bacillus pumilus (strain SAFR-032).